A 182-amino-acid chain; its full sequence is MSQSDLESSMRKSVEATQRNFNTIRTGRANSSLLDRISVEYYGAETPLKSLATLSTPDSQTIQIQPFDISALALIEKAIAMSELGFTPNNDGKVIRINVPPLTEERRKEFCKLASKYAEEGKVALRNLRRDAIDKIKKQEKEGEFSEDQSRDAQDSVQKTLDKFIAEVEQHLATKEADILKV.

Belongs to the RRF family.

The protein localises to the cytoplasm. Responsible for the release of ribosomes from messenger RNA at the termination of protein biosynthesis. May increase the efficiency of translation by recycling ribosomes from one round of translation to another. The protein is Ribosome-recycling factor of Synechococcus sp. (strain WH7803).